Here is a 202-residue protein sequence, read N- to C-terminus: FMN-dependent NADH:quinone oxidoreductase 1 (202 aa).

Residues Ser9, 15 to 17 (SAS), 95 to 98 (MYNF), and 139 to 142 (TSGG) each bind FMN.

The protein belongs to the azoreductase type 1 family. In terms of assembly, homodimer. It depends on FMN as a cofactor.

The enzyme catalyses 2 a quinone + NADH + H(+) = 2 a 1,4-benzosemiquinone + NAD(+). The catalysed reaction is N,N-dimethyl-1,4-phenylenediamine + anthranilate + 2 NAD(+) = 2-(4-dimethylaminophenyl)diazenylbenzoate + 2 NADH + 2 H(+). Quinone reductase that provides resistance to thiol-specific stress caused by electrophilic quinones. Its function is as follows. Also exhibits azoreductase activity. Catalyzes the reductive cleavage of the azo bond in aromatic azo compounds to the corresponding amines. The protein is FMN-dependent NADH:quinone oxidoreductase 1 of Pseudomonas syringae pv. tomato (strain ATCC BAA-871 / DC3000).